A 216-amino-acid polypeptide reads, in one-letter code: UPF0502 protein PFL_4004 (216 aa).

Belongs to the UPF0502 family.

This Pseudomonas fluorescens (strain ATCC BAA-477 / NRRL B-23932 / Pf-5) protein is UPF0502 protein PFL_4004.